The sequence spans 430 residues: Trigger factor (430 aa).

In terms of domain architecture, PPIase FKBP-type spans 157–242; sequence GDLVALETWS…AVEVSEPVLP (86 aa).

It belongs to the FKBP-type PPIase family. Tig subfamily.

It is found in the cytoplasm. It catalyses the reaction [protein]-peptidylproline (omega=180) = [protein]-peptidylproline (omega=0). Involved in protein export. Acts as a chaperone by maintaining the newly synthesized protein in an open conformation. Functions as a peptidyl-prolyl cis-trans isomerase. The polypeptide is Trigger factor (Xanthomonas axonopodis pv. citri (strain 306)).